We begin with the raw amino-acid sequence, 459 residues long: Bifunctional protein GlmU (459 aa).

The interval 1-229 is pyrophosphorylase; that stretch reads MSNFAIILAA…FDESLGVNDR (229 aa). UDP-N-acetyl-alpha-D-glucosamine is bound by residues 8–11, lysine 22, glutamine 72, and 77–78; these read LAAG and GT. Aspartate 102 contributes to the Mg(2+) binding site. UDP-N-acetyl-alpha-D-glucosamine contacts are provided by glycine 139, glutamate 154, asparagine 169, and asparagine 227. Asparagine 227 contributes to the Mg(2+) binding site. Positions 230 to 250 are linker; that stretch reads VALATAESVMRRRINHKHMVN. An N-acetyltransferase region spans residues 251–459; it reads GVSFVNPEAT…TRLPHHPKNQ (209 aa). The UDP-N-acetyl-alpha-D-glucosamine site is built by arginine 332 and lysine 350. Residue histidine 362 is the Proton acceptor of the active site. UDP-N-acetyl-alpha-D-glucosamine contacts are provided by tyrosine 365 and asparagine 376. Residues alanine 379, 385–386, serine 404, alanine 422, and arginine 439 each bind acetyl-CoA; that span reads NY.

In the N-terminal section; belongs to the N-acetylglucosamine-1-phosphate uridyltransferase family. This sequence in the C-terminal section; belongs to the transferase hexapeptide repeat family. As to quaternary structure, homotrimer. It depends on Mg(2+) as a cofactor.

Its subcellular location is the cytoplasm. It catalyses the reaction alpha-D-glucosamine 1-phosphate + acetyl-CoA = N-acetyl-alpha-D-glucosamine 1-phosphate + CoA + H(+). It carries out the reaction N-acetyl-alpha-D-glucosamine 1-phosphate + UTP + H(+) = UDP-N-acetyl-alpha-D-glucosamine + diphosphate. It participates in nucleotide-sugar biosynthesis; UDP-N-acetyl-alpha-D-glucosamine biosynthesis; N-acetyl-alpha-D-glucosamine 1-phosphate from alpha-D-glucosamine 6-phosphate (route II): step 2/2. It functions in the pathway nucleotide-sugar biosynthesis; UDP-N-acetyl-alpha-D-glucosamine biosynthesis; UDP-N-acetyl-alpha-D-glucosamine from N-acetyl-alpha-D-glucosamine 1-phosphate: step 1/1. Its pathway is bacterial outer membrane biogenesis; LPS lipid A biosynthesis. Functionally, catalyzes the last two sequential reactions in the de novo biosynthetic pathway for UDP-N-acetylglucosamine (UDP-GlcNAc). The C-terminal domain catalyzes the transfer of acetyl group from acetyl coenzyme A to glucosamine-1-phosphate (GlcN-1-P) to produce N-acetylglucosamine-1-phosphate (GlcNAc-1-P), which is converted into UDP-GlcNAc by the transfer of uridine 5-monophosphate (from uridine 5-triphosphate), a reaction catalyzed by the N-terminal domain. The sequence is that of Bifunctional protein GlmU from Streptococcus pneumoniae (strain Taiwan19F-14).